The following is a 197-amino-acid chain: UPF0301 protein AnaeK_4073 (197 aa).

The protein belongs to the UPF0301 (AlgH) family.

The protein is UPF0301 protein AnaeK_4073 of Anaeromyxobacter sp. (strain K).